The chain runs to 396 residues: MGFLKTCVFRRNACTAVCFWRSQVVQKPSVRKISTTSPRSTVMPAWVIDKYGSNEVLRFTQNMMIPMIHYPNEVIIKVHAASINPIDVNMRSGYGATALNMKRDPLHVKIKGEEFPLTLGRDVSGVVMECGLDVRYFKPGDEVWAAVPPWKQGTLSEFVVVSGNEVSHKPRSLTHTQAASLPYVALTAWSAINKVGGLNDRNCTGKRVLILGASGGVGTFAIQVMKAWDAHVTAVCSQDASELVRKLGADDVIDYKSGNVEAQLKSSKPFDFILDNVGGSTETWALKFLKKWSGATYVTLVTPFLLNMDRLGIADGMLQTGVTVGSKTLKHFWQGVHYRWAFFMASGPCLDDIAELVEAGKIQPVIEKTFPFSKVPEAFLKVERGHARGKTVINVV.

Residues 1–40 (MGFLKTCVFRRNACTAVCFWRSQVVQKPSVRKISTTSPRS) constitute a mitochondrion transit peptide. Residues 52–393 (GSNEVLRFTQ…RGHARGKTVI (342 aa)) enclose the Enoyl reductase (ER) domain. NADPH-binding residues include Ser-214, Gly-216, Val-217, Ser-237, Tyr-255, Asn-276, Leu-300, Ala-341, Phe-343, His-386, Ala-387, and Arg-388.

Belongs to the zinc-containing alcohol dehydrogenase family. Quinone oxidoreductase subfamily. As to quaternary structure, interacts with RTN4, UQCRC1 and UQCRC2.

It is found in the mitochondrion matrix. The protein localises to the mitochondrion outer membrane. It catalyses the reaction a 3-demethylubiquinone + NADH + 2 H(+) = a 3-demethylubiquinol + NAD(+). The enzyme catalyses a 3-demethylubiquinone + NADPH + 2 H(+) = a 3-demethylubiquinol + NADP(+). The catalysed reaction is 3-demethylubiquinone-10 + NADH + 2 H(+) = 3-demethylubiquinol-10 + NAD(+). It carries out the reaction 3-demethylubiquinone-10 + NADPH + 2 H(+) = 3-demethylubiquinol-10 + NADP(+). It functions in the pathway cofactor biosynthesis; ubiquinone biosynthesis. Functionally, NAD(P)H oxidoreductase involved in the ubiquinone biosynthetic pathway. Required for the O-methyltransferase activity of COQ3. Able to catalyze the oxidoreduction of 3-demethylubiquinone into 3-demethylubiquinol in vitro. However, it is unclear if 3-demethylubiquinone constitutes a substrate in vivo. May also play a role in the regulation of retinal ganglion cell (RGC) neurite outgrowth, and hence in the development of the inner retina and optic nerve. Appears to be a potent inhibitor of regeneration following spinal cord injury. In Bos taurus (Bovine), this protein is NAD(P)H oxidoreductase RTN4IP1, mitochondrial (RTN4IP1).